Here is a 216-residue protein sequence, read N- to C-terminus: Peptide methionine sulfoxide reductase MsrA (216 aa).

Cys-54 is a catalytic residue.

The protein belongs to the MsrA Met sulfoxide reductase family.

It catalyses the reaction L-methionyl-[protein] + [thioredoxin]-disulfide + H2O = L-methionyl-(S)-S-oxide-[protein] + [thioredoxin]-dithiol. The catalysed reaction is [thioredoxin]-disulfide + L-methionine + H2O = L-methionine (S)-S-oxide + [thioredoxin]-dithiol. Its function is as follows. Has an important function as a repair enzyme for proteins that have been inactivated by oxidation. Catalyzes the reversible oxidation-reduction of methionine sulfoxide in proteins to methionine. This chain is Peptide methionine sulfoxide reductase MsrA, found in Xanthomonas campestris pv. campestris (strain ATCC 33913 / DSM 3586 / NCPPB 528 / LMG 568 / P 25).